Here is a 1489-residue protein sequence, read N- to C-terminus: FERM domain-containing protein C (1489 aa).

Composition is skewed to polar residues over residues 59-79 (DTES…NFNS) and 103-118 (NSPL…STSI). Disordered regions lie at residues 59–86 (DTES…HQHL), 103–197 (NSPL…PSTL), 252–271 (NSVQ…NNNN), and 277–312 (EQQQ…TPDS). Over residues 131–153 (SSSSSSSDGDSNSSSDSSDNSSE) the composition is skewed to low complexity. A compositionally biased stretch (basic residues) spans 163-172 (HLHLHRHHRK). A compositionally biased stretch (low complexity) spans 181–195 (FESSSESSEQYGSPS). Positions 202 to 289 (ALKLEKIMQI…QEKQQQQQQH (88 aa)) form a coiled coil. Residues 277–287 (EQQQEKQQQQQ) are compositionally biased toward low complexity. Over residues 303-312 (RSVSISTPDS) the composition is skewed to polar residues. Residues 356-383 (IKVSKVLEEEMQLQQEFEKQEQLRHSAR) are a coiled coil. 3 disordered regions span residues 396 to 435 (NLQD…ENQN), 459 to 479 (VITP…KILT), and 508 to 569 (EDPL…TTTT). Low complexity predominate over residues 421-435 (ENVSNDNSSDNENQN). Residues 545–555 (TASSSSSPTLQ) are compositionally biased toward polar residues. Low complexity predominate over residues 556–569 (ATKTTTTTTTTTTT). An FERM domain is found at 637–934 (ILVHISLVDQ…GYKYFIQHDE (298 aa)). 13 LRR repeats span residues 1017-1040 (KVEL…LKDT), 1053-1075 (ENLN…AFEP), 1087-1110 (HLNL…IEKY), 1111-1133 (PNIE…VILR), 1167-1191 (NKTI…IFEG), 1196-1219 (SLSL…KFIK), 1254-1278 (SCHI…VIKG), 1282-1306 (NQTI…LCQS), 1339-1362 (NKTI…AIGT), 1367-1391 (NETL…ILNG), 1395-1418 (NSTI…SLAN), 1428-1450 (VITL…QLST), and 1451-1474 (NIPI…IKNA).

The polypeptide is FERM domain-containing protein C (frmC) (Dictyostelium discoideum (Social amoeba)).